The primary structure comprises 122 residues: Alkaline proteinase inhibitor (122 aa).

The N-terminal stretch at 1 to 25 is a signal peptide; the sequence is MPRFSHLIGCVWQVLFVSAGAQAMA. The interval 101–122 is disordered; sequence QKEGEYTGRTPSGADVTLQRTN.

This sequence belongs to the protease inhibitor I38 family.

The protein localises to the periplasm. Its function is as follows. Inhibitor of the alkaline protease. The protein is Alkaline proteinase inhibitor (inh) of Pseudomonas tolaasii.